A 33-amino-acid polypeptide reads, in one-letter code: Natriuretic peptide NP2 (33 aa).

A disulfide bridge links C10 with C26.

In terms of tissue distribution, expressed by the venom gland.

It is found in the secreted. Functionally, snake venom natriuretic peptide that shows an increase in perfusion pressure, urinary flow and glomerular filtration rate. Reduces total and proximal tubular transport of sodium. In the aortic ring assay, causes a relaxant effect in endothelium-intact thoracic aortic rings precontracted with phenylephrine in the presence and absence of isatin, a natriuretic receptor antagonist. In Crotalus durissus cascavella (Northeastern Brazilian rattlesnake), this protein is Natriuretic peptide NP2.